A 303-amino-acid chain; its full sequence is Mitochondrial substrate carrier family protein E (303 aa).

Residues 1–8 (MENKKESS) are Mitochondrial intermembrane-facing. Solcar repeat units lie at residues 6 to 93 (ESSL…SKQW), 104 to 197 (ESTI…CKST), and 210 to 298 (LPIP…LKYL). The chain crosses the membrane as a helical span at residues 9 to 29 (LLYILTGATSGLLADSIMHPV). The Mitochondrial matrix portion of the chain corresponds to 30 to 67 (DTVRARVQIEKVGKSQYKGTFNALNQIIKNEGVSYLYK). The chain crosses the membrane as a helical span at residues 68–88 (GFPIVATATVPAHALYFLGYE). At 89-109 (YSKQWVTDRYGKKWGESTITH) the chain is on the mitochondrial intermembrane side. The chain crosses the membrane as a helical span at residues 110 to 130 (FSAGFVADALGSLIWVPMDII). Residues 131–171 (KQRLQVQTNTQKLNPNQTYYKGSFHAGKIILQEEGIRGLYR) are Mitochondrial matrix-facing. Residues 172–192 (GFMPALATYGPFVGIYFSVYE) traverse the membrane as a helical segment. The Mitochondrial intermembrane segment spans residues 193-215 (KCKSTISSLLSKEKDQYLPIPYQ). Residues 216–236 (LGSGFFAGAFAAAVTCPLDVI) traverse the membrane as a helical segment. Topologically, residues 237–268 (KTRIQVQRSTEKQIYKGMWDSFKTILKEEGPK) are mitochondrial matrix. The helical transmembrane segment at 269 to 289 (AFVKGMGARIWWIAPGNALTI) threads the bilayer. Residues 290 to 303 (ASYEQLKYLFKDLI) are Mitochondrial intermembrane-facing.

Belongs to the mitochondrial carrier (TC 2.A.29) family.

It localises to the mitochondrion inner membrane. In terms of biological role, mitochondrial solute carriers shuttle metabolites, nucleotides, and cofactors through the mitochondrial inner membrane. This chain is Mitochondrial substrate carrier family protein E (mcfE), found in Dictyostelium discoideum (Social amoeba).